The following is a 303-amino-acid chain: MGTPYHLGIDVGGTKVAFRVESGSACIEETSFSWGARHSAEDDLAQLAGHVARLRERIGTPLEAVGVAMPGTVGADGRVATWPSRPEWTGVDLKTALHSLFPEAAVAWADDGDLGALAESRASGCENLLYIGIGTGIGGGLVLGGVPCPGLGRGSFEIGHVIVEMGGVRCVCGRRGCLQALASGPATLRRASLLRGADVTYYRLQRALRNGEPWAADALEGSTRALAAAVTGVQELVHPDRVLIGGGFAAGIPEIVPSVSGFLADLVRQGQAPLPVEPAALGGLSSLRGAVALAGLVAAGEVP.

The protein belongs to the ROK (NagC/XylR) family.

The enzyme catalyses kanosamine + ATP = D-kanosamine 6-phosphate + ADP + H(+). It participates in antibiotic biosynthesis; rifamycin B biosynthesis. Inhibited by Zn(2+), Cu(2+), and Fe(2+). In terms of biological role, involved in the biosynthesis of 3-amino-5-hydroxybenzoate (AHBA), a compound that then serves as the starter unit for the assembly of a polyketide during the biosynthesis of rifamycin B and other ansamycin antibiotics. Catalyzes only the phosphorylation of kanosamine to yield kanosamine 6-phosphate. The sequence is that of Kanosamine kinase (rifN) from Amycolatopsis mediterranei (strain S699) (Nocardia mediterranei).